A 187-amino-acid polypeptide reads, in one-letter code: Peptidoglycan-recognition protein 2 (187 aa).

The N-terminal stretch at 1–19 is a signal peptide; the sequence is MKAFLVALVVAIELTLVFA. 2 disulfides stabilise this stretch: cysteine 21-cysteine 144 and cysteine 58-cysteine 64. The 128-residue stretch at 43-170 folds into the N-acetylmuramoyl-L-alanine amidase domain; that stretch reads KPLKYVIIHH…RTVRPTDSPG (128 aa).

It belongs to the N-acetylmuramoyl-L-alanine amidase 2 family. Localizes to plasma (at protein level).

The protein localises to the secreted. Peptidoglycan-recognition protein probably involved in innate immunity by binding to peptidoglycans (PGN) of bacteria and activating the prophenoloxidase (proPO) cascade immune response. Binds to 1,3-beta-D-glucan and PGN. In Holotrichia diomphalia (Korean black chafer), this protein is Peptidoglycan-recognition protein 2 (PGRP-2).